Here is a 454-residue protein sequence, read N- to C-terminus: Tubulin alpha chain (454 aa).

The GTP site is built by Gln-12, Asp-72, Ser-141, Gly-145, Thr-146, Thr-180, Asn-207, and Asn-229. Asp-72 contributes to the Mg(2+) binding site. Glu-255 is a catalytic residue.

Belongs to the tubulin family. As to quaternary structure, dimer of alpha and beta chains. A typical microtubule is a hollow water-filled tube with an outer diameter of 25 nm and an inner diameter of 15 nM. Alpha-beta heterodimers associate head-to-tail to form protofilaments running lengthwise along the microtubule wall with the beta-tubulin subunit facing the microtubule plus end conferring a structural polarity. Microtubules usually have 13 protofilaments but different protofilament numbers can be found in some organisms and specialized cells. It depends on Mg(2+) as a cofactor.

Its subcellular location is the cytoplasm. It localises to the cytoskeleton. The catalysed reaction is GTP + H2O = GDP + phosphate + H(+). In terms of biological role, tubulin is the major constituent of microtubules, a cylinder consisting of laterally associated linear protofilaments composed of alpha- and beta-tubulin heterodimers. Microtubules grow by the addition of GTP-tubulin dimers to the microtubule end, where a stabilizing cap forms. Below the cap, tubulin dimers are in GDP-bound state, owing to GTPase activity of alpha-tubulin. The sequence is that of Tubulin alpha chain (TUB1) from Colletotrichum orbiculare (strain 104-T / ATCC 96160 / CBS 514.97 / LARS 414 / MAFF 240422) (Cucumber anthracnose fungus).